The sequence spans 178 residues: MEDRPSADEVLLIGTVVDAFGLHGEIKVRSVTDRVDHLRHHVQTVFVGEERRPFPLQRIREPKTGVLILTLGGVTDRTMAEALRGAEVTIRECDAAPLEADEYFIHQLYGLRVVESSGAEIGIVREVLQTGANDVIVVERHGRSDTLLPMIHDVVESLDVAAGQIVVRLLPGLIDEEG.

One can recognise a PRC barrel domain in the interval 100–173 (ADEYFIHQLY…QIVVRLLPGL (74 aa)).

This sequence belongs to the RimM family. In terms of assembly, binds ribosomal protein uS19.

Its subcellular location is the cytoplasm. An accessory protein needed during the final step in the assembly of 30S ribosomal subunit, possibly for assembly of the head region. Essential for efficient processing of 16S rRNA. May be needed both before and after RbfA during the maturation of 16S rRNA. It has affinity for free ribosomal 30S subunits but not for 70S ribosomes. The sequence is that of Ribosome maturation factor RimM from Roseiflexus castenholzii (strain DSM 13941 / HLO8).